The chain runs to 489 residues: Rhamnulokinase (489 aa).

13–17 contributes to the ATP binding site; it reads ASSGR. A disulfide bridge links Cys68 with Cys222. Substrate contacts are provided by residues Gly83 and 236–238; that span reads HDT. The Proton acceptor role is filled by Asp237. Thr259 contributes to the ATP binding site. Asn296 lines the substrate pocket. Position 304 (Gln304) interacts with ATP. A disulfide bridge links Cys353 with Cys370. Gly402 contributes to the ATP binding site. An intrachain disulfide couples Cys413 to Cys417.

It belongs to the rhamnulokinase family. In terms of assembly, monomer. The cofactor is Mg(2+).

The catalysed reaction is L-rhamnulose + ATP = L-rhamnulose 1-phosphate + ADP + H(+). It participates in carbohydrate degradation; L-rhamnose degradation; glycerone phosphate from L-rhamnose: step 2/3. In terms of biological role, involved in the catabolism of L-rhamnose (6-deoxy-L-mannose). Catalyzes the transfer of the gamma-phosphate group from ATP to the 1-hydroxyl group of L-rhamnulose to yield L-rhamnulose 1-phosphate. The chain is Rhamnulokinase from Escherichia fergusonii (strain ATCC 35469 / DSM 13698 / CCUG 18766 / IAM 14443 / JCM 21226 / LMG 7866 / NBRC 102419 / NCTC 12128 / CDC 0568-73).